Reading from the N-terminus, the 131-residue chain is D-ribose pyranase (131 aa).

His-20 (proton donor) is an active-site residue. Substrate is bound by residues Asp-28, His-98, and 120–122 (YAN).

This sequence belongs to the RbsD / FucU family. RbsD subfamily. In terms of assembly, homodecamer.

The protein resides in the cytoplasm. The catalysed reaction is beta-D-ribopyranose = beta-D-ribofuranose. The protein operates within carbohydrate metabolism; D-ribose degradation; D-ribose 5-phosphate from beta-D-ribopyranose: step 1/2. Catalyzes the interconversion of beta-pyran and beta-furan forms of D-ribose. The protein is D-ribose pyranase of Bacillus cereus (strain B4264).